A 217-amino-acid chain; its full sequence is MSKSRAEAAAGAPGIILRYLQEQNRPYSAQDVFGNLQKEHGLGKAAVVKALDQLAQEGKIKEKTYGKQKIYFADQNQFDTVSDADLHGLDASIVALTAKVQSLQQSCRHMEAELKELTSALTTPEMQKEIQELKKECAQYTERLKNIKAATNHVTPEEKEKVYRDRQKYCKEWRKRKRMTTELCDAILEGYPKSKKQFFEEVGIETDEDHNVLLPDP.

The stretch at 84 to 152 (ADLHGLDASI…RLKNIKAATN (69 aa)) forms a coiled coil. A DNA-binding region spans residues 118-182 (TSALTTPEMQ…WRKRKRMTTE (65 aa)).

This sequence belongs to the HOP2 family. Interacts with the DNA-binding domain of the nuclear receptors NR3C1/GR, ESR2/ER-beta, THRB and RXRA. Forms a stable heterodimer with MND1. Interacts with PSMC3/TBP1. In terms of processing, phosphorylated by PKA, PKC and MAPK. Highly expressed in testis and more specifically in spermatocytes. Detected in spleen, ovary and thymus.

The protein localises to the nucleus. In terms of biological role, plays an important role in meiotic recombination. Stimulates DMC1-mediated strand exchange required for pairing homologous chromosomes during meiosis. The complex PSMC3IP/MND1 binds DNA, stimulates the recombinase activity of DMC1 as well as DMC1 D-loop formation from double-strand DNA. This complex stabilizes presynaptic RAD51 and DMC1 filaments formed on single strand DNA to capture double-strand DNA. This complex stimulates both synaptic and presynaptic critical steps in RAD51 and DMC1-promoted homologous pairing. May inhibit HIV-1 viral protein TAT activity and modulate the activity of proteasomes through association with PSMC3. The sequence is that of Homologous-pairing protein 2 homolog (Psmc3ip) from Mus musculus (Mouse).